Here is a 161-residue protein sequence, read N- to C-terminus: Nucleotide-binding protein mma_0840 (161 aa).

Belongs to the YajQ family.

In terms of biological role, nucleotide-binding protein. The protein is Nucleotide-binding protein mma_0840 of Janthinobacterium sp. (strain Marseille) (Minibacterium massiliensis).